The chain runs to 630 residues: Glutamyl-tRNA(Gln) amidotransferase subunit E (630 aa).

This sequence belongs to the GatB/GatE family. GatE subfamily. As to quaternary structure, heterodimer of GatD and GatE.

The enzyme catalyses L-glutamyl-tRNA(Gln) + L-glutamine + ATP + H2O = L-glutaminyl-tRNA(Gln) + L-glutamate + ADP + phosphate + H(+). Functionally, allows the formation of correctly charged Gln-tRNA(Gln) through the transamidation of misacylated Glu-tRNA(Gln) in organisms which lack glutaminyl-tRNA synthetase. The reaction takes place in the presence of glutamine and ATP through an activated gamma-phospho-Glu-tRNA(Gln). The GatDE system is specific for glutamate and does not act on aspartate. This chain is Glutamyl-tRNA(Gln) amidotransferase subunit E, found in Methanocaldococcus jannaschii (strain ATCC 43067 / DSM 2661 / JAL-1 / JCM 10045 / NBRC 100440) (Methanococcus jannaschii).